The following is a 444-amino-acid chain: Glutamyl-tRNA reductase (444 aa).

Substrate-binding positions include Thr-49 to Arg-52, Ser-109, Glu-114 to Gln-116, and Gln-120. Cys-50 acts as the Nucleophile in catalysis. Residue Gly-189–Ser-194 participates in NADP(+) binding. A disordered region spans residues Lys-425 to Gly-444.

The protein belongs to the glutamyl-tRNA reductase family. In terms of assembly, homodimer.

The enzyme catalyses (S)-4-amino-5-oxopentanoate + tRNA(Glu) + NADP(+) = L-glutamyl-tRNA(Glu) + NADPH + H(+). It participates in porphyrin-containing compound metabolism; protoporphyrin-IX biosynthesis; 5-aminolevulinate from L-glutamyl-tRNA(Glu): step 1/2. Functionally, catalyzes the NADPH-dependent reduction of glutamyl-tRNA(Glu) to glutamate 1-semialdehyde (GSA). The protein is Glutamyl-tRNA reductase of Pelotomaculum thermopropionicum (strain DSM 13744 / JCM 10971 / SI).